The following is a 266-amino-acid chain: Protein crossbronx-like (266 aa).

A UBC core domain is found at 15 to 178 (KQGYHILAEY…VQEQAILSRN (164 aa)). A disordered region spans residues 234-266 (SSRQLDEEEANQVEKLHRGRIPEHQREESEVSL). Over residues 245-266 (QVEKLHRGRIPEHQREESEVSL) the composition is skewed to basic and acidic residues.

This sequence belongs to the ubiquitin-conjugating enzyme family. FTS subfamily.

The polypeptide is Protein crossbronx-like (Drosophila melanogaster (Fruit fly)).